We begin with the raw amino-acid sequence, 254 residues long: MLRILLSNDDGVTAPGIQVLAAALRENYHVQVVAPDRNRSGASNALTLDRSLSVNTLENGDISVLGGTPTDCVYLGVNRLVLPRPEIVVSGINRGPNLGDDVIYSGTVAAAMEGRHLGLPALAISLNGELHYQTAAEITCRLLQMLQTTPLRAGNILNVNVPDLPLEHIKGFRVTRCGSRHAAEEVYSMQDPKGNMLYWLGPPGDKHDAGPETDFAAVEQGYVSITPLQVDLTAYKAQALVRDWLAKAEVDGEC.

Positions 9, 10, 40, and 93 each coordinate a divalent metal cation.

This sequence belongs to the SurE nucleotidase family. The cofactor is a divalent metal cation.

Its subcellular location is the cytoplasm. It carries out the reaction a ribonucleoside 5'-phosphate + H2O = a ribonucleoside + phosphate. It catalyses the reaction a ribonucleoside 3'-phosphate + H2O = a ribonucleoside + phosphate. The enzyme catalyses [phosphate](n) + H2O = [phosphate](n-1) + phosphate + H(+). Its function is as follows. Nucleotidase with a broad substrate specificity as it can dephosphorylate various ribo- and deoxyribonucleoside 5'-monophosphates and ribonucleoside 3'-monophosphates with highest affinity to 3'-AMP. Also hydrolyzes polyphosphate (exopolyphosphatase activity) with the preference for short-chain-length substrates (P20-25). Might be involved in the regulation of dNTP and NTP pools, and in the turnover of 3'-mononucleotides produced by numerous intracellular RNases (T1, T2, and F) during the degradation of various RNAs. In Photorhabdus laumondii subsp. laumondii (strain DSM 15139 / CIP 105565 / TT01) (Photorhabdus luminescens subsp. laumondii), this protein is 5'/3'-nucleotidase SurE.